Here is a 266-residue protein sequence, read N- to C-terminus: Signal peptidase I (266 aa).

Topologically, residues 1-20 (MQTDNTKSNTNKTAKQEWWS) are cytoplasmic. The chain crosses the membrane as a helical span at residues 21–41 (CAFVICIALLIRILIMEPFTV). Residues 42-266 (PTGSMKATIL…IFRNLYNTDE (225 aa)) lie on the Periplasmic side of the membrane. Active-site residues include serine 45 and lysine 108.

Belongs to the peptidase S26 family.

The protein resides in the cell inner membrane. The catalysed reaction is Cleavage of hydrophobic, N-terminal signal or leader sequences from secreted and periplasmic proteins.. The sequence is that of Signal peptidase I (lepB) from Rickettsia akari (strain Hartford).